Reading from the N-terminus, the 1563-residue chain is NACHT domain- and WD repeat-containing protein 1 (1563 aa).

The stretch at 274-314 (TNHQVLEQLRELELARQELGWLYQEIRHHLWQSTESTKVFC) is one WD 1 repeat. The NACHT domain occupies 336-666 (TPLVLFGPPG…HRQLSQVIQV (331 aa)). Residue 342 to 349 (GPPGIGKT) participates in ATP binding. WD repeat units follow at residues 866–905 (GCHK…VVHV), 908–947 (GHTA…EKVT), 954–994 (QNPT…LVFC), 998–1037 (DVSD…LQEK), 1044–1082 (KEET…LLEK), 1126–1165 (EHED…TLLN), 1168–1207 (EGVG…KLQS), 1212–1251 (LDRT…EQDC), 1253–1292 (DTSN…DVLC), 1346–1385 (QLPE…FPLE), 1386–1425 (AHGS…GMFE), and 1431–1470 (SCCR…LLAV). A disordered region spans residues 1534–1563 (AAEASQDAEPVAVEGKESKSNKRSQVCLIL).

May interact with HSP90AA1, HSP90AB1 and BAG2.

It localises to the cytoplasm. The protein resides in the cytosol. Functionally, may play a role in the control of androgen receptor (AR) protein steady-state levels. The protein is NACHT domain- and WD repeat-containing protein 1 (Nwd1) of Mus musculus (Mouse).